Consider the following 92-residue polypeptide: Co-chaperonin GroES (92 aa).

Belongs to the GroES chaperonin family. Heptamer of 7 subunits arranged in a ring. Interacts with the chaperonin GroEL.

It localises to the cytoplasm. Functionally, together with the chaperonin GroEL, plays an essential role in assisting protein folding. The GroEL-GroES system forms a nano-cage that allows encapsulation of the non-native substrate proteins and provides a physical environment optimized to promote and accelerate protein folding. GroES binds to the apical surface of the GroEL ring, thereby capping the opening of the GroEL channel. This is Co-chaperonin GroES from Methanosarcina barkeri (strain Fusaro / DSM 804).